Here is a 619-residue protein sequence, read N- to C-terminus: ETS-related transcription factor Elf-1 (619 aa).

Phosphoserine is present on residues serine 110, serine 163, serine 167, and serine 168. Residues 158–199 are disordered; it reads EKYADSPGASSPEQPKRKKGRKTKPPRPDSPATTPNISVKKK. Residues 173-182 are compositionally biased toward basic residues; sequence KRKKGRKTKP. Position 187 is a phosphoserine (serine 187). At threonine 190 the chain carries Phosphothreonine. A DNA-binding region (ETS) is located at residues 208–290; the sequence is IYLWEFLLAL…EGQRLVYQFK (83 aa). The segment at 300–366 is disordered; the sequence is NDEDPSSSIE…DPVEVAQPSE (67 aa). The segment covering 305-321 has biased composition (low complexity); it reads SSSIESSDPSLSSSATS. Over residues 322–335 the composition is skewed to polar residues; the sequence is NRNQTSRSRVSSSP. Serine 432 carries the phosphoserine modification. Residues 564–592 form a disordered region; that stretch reads TLTQEVEKKESEDHLKENTEKTEQQPQPY. Residues 568-586 show a composition bias toward basic and acidic residues; sequence EVEKKESEDHLKENTEKTE.

It belongs to the ETS family. Binds to the underphosphorylated form of RB. May interact with other transcription factors in order to regulate specific genes. Interacts with RUNX1. In terms of tissue distribution, in fetal tissues, it is highly expressed in heart, lung liver and kidney, and weakly expressed in brain. In adult, it is highly expressed in pancreas, spleen, thymus and peripheral blood leukocytes, expressed at moderate levels in heart, placenta, lung, liver, skeletal muscle, kidney, prostate, ovary, small intestine and colon, and weakly expressed in brain and testis.

It is found in the nucleus. Its function is as follows. Transcription factor that activates the LYN and BLK promoters. Appears to be required for the T-cell-receptor-mediated trans activation of HIV-2 gene expression. Binds specifically to two purine-rich motifs in the HIV-2 enhancer. In Homo sapiens (Human), this protein is ETS-related transcription factor Elf-1 (ELF1).